The sequence spans 749 residues: Protein Niban 2 (749 aa).

A lipid anchor (N-myristoyl glycine) is attached at G2. The 125-residue stretch at 68-192 folds into the PH domain; sequence RIIFSGNLFQ…WQAVLQDCVR (125 aa). A phosphoserine mark is found at S568, S574, S607, S628, S647, S650, S669, S674, S685, S695, and S699. Residues 589–749 form a disordered region; the sequence is WGEQYGDSGD…EDSAGVQTEF (161 aa). The segment covering 710–719 has biased composition (basic and acidic residues); sequence VDLEPPKPSD. Residues 723–749 show a composition bias toward polar residues; sequence GEQVSSPGSRPPIHTTTEDSAGVQTEF.

It belongs to the Niban family. In terms of processing, as apoptosis proceeds, degraded via an proteasome-independent pathway, probably by caspases.

The protein resides in the cytoplasm. It localises to the cytosol. The protein localises to the cell junction. Its subcellular location is the adherens junction. It is found in the membrane. Its function is as follows. May play a role in apoptosis suppression. The polypeptide is Protein Niban 2 (Mus musculus (Mouse)).